Reading from the N-terminus, the 321-residue chain is UDP-N-acetyl-alpha-D-glucosaminuronate decarboxylase (321 aa).

12 residues coordinate NAD(+): G12, F13, I14, D33, N34, Y36, G38, L76, T95, A117, Y148, and K152. The Proton acceptor role is filled by Y148.

The protein belongs to the NAD(P)-dependent epimerase/dehydratase family. In terms of assembly, homodimer. The cofactor is NAD(+).

It carries out the reaction UDP-2-acetamido-2-deoxy-alpha-D-glucuronate + H(+) = UDP-N-acetyl-alpha-D-xylosamine + CO2. Its activity is regulated as follows. Activity is completely inhibited by NADH but not by NADPH. In terms of biological role, decarboxylase involved in the biosynthesis of the nucleotide-sugar UDP-N-acetylxylosamine (UDP-XylNAc). Catalyzes the NAD-dependent decarboxylation of UDP-N-acetylglucosaminuronic acid (UDP-GlcNAcA) to UDP-XylNAc. Cannot use other UDP-uronates, such as UDP-glucuronic acid (UDP-GlcA) and UDP-galacturonic acid (UDP-GalA). The chain is UDP-N-acetyl-alpha-D-glucosaminuronate decarboxylase from Bacillus cytotoxicus (strain DSM 22905 / CIP 110041 / 391-98 / NVH 391-98).